Consider the following 161-residue polypeptide: Large ribosomal subunit protein eL21 (161 aa).

The protein belongs to the eukaryotic ribosomal protein eL21 family.

In Caenorhabditis elegans, this protein is Large ribosomal subunit protein eL21 (rpl-21).